Consider the following 1038-residue polypeptide: MKNNLRYGIRKHKLGAASVFLGTMIVVGMGQDKEAAASEQKTTTVEENGNSATDNKTSETQTTATNVNHIEETQSYNATVTEQPSNATQVTTEEAPKAVQAPQTAQPANVETVKEEEKPQVKETTQPQDNSGNQRQVDLTPKKVTQNQGTETQVEVAQPRTASESKPRVTRSADVAEAKEASDVSEVKGTDVTSKVTVESGSIEAPQGNKVEPHAGQRVVLKYKLKFADGLKRGDYFDFTLSNNVNTYGVSTARKVPEIKNGSVVMATGEILGNGNIRYTFTNEIEHKVEVTANLEINLFIDPKTVQSNGEQKITSKLNGEETEKTIPVVYNPGVSNSYTNVNGSIETFNKESNKFTHIAYIKPMNGNQSNTVSVTGTLTEGSNLAGGQPTVKVYEYLGKKDELPQSVYANTSDTNKFKDVTKEMNGKLSVQDNGSYSLNLDKLDKTYVIHYTGEYLQGSDQVNFRTELYGYPERAYKSYYVYGGYRLTWDNGLVLYSNKADGNGKNGQIIQDNDFEYKEDTAKGTMSGQYDAKQIIETEENQDNTPLDIDYHTAIDGEGGYVDGYIETIEETDSSAIDIDYHTAVDSEVGHVGGYTESSEESNPIDFEESTHENSKHHADVVEYEEDTNPGGGQVTTESNLVEFDEESTKGIVTGAVSDHTTIEDTKEYTTESNLIELVDELPEEHGQAQGPIEEITENNHHISHSGLGTENGHGNYGVIEEIEENSHVDIKSELGYEGGQNSGNQSFEEDTEEDKPKYEQGGNIVDIDFDSVPQIHGQNKGDQSFEEDTEKDKPKYEHGGNIIDIDFDSVPQIHGFNKHNEIIEEDTNKDKPNYQFGGHNSVDFEEDTLPKVSGQNEGQQTIEEDTTPPTPPTPEVPSEPETPMPPTPEVPSEPETPTPPTPEVPSEPETPTPPTPEVPSEPETPTPPTPEVPSEPETPTPPTPEVPAEPGKPVPPAKEEPKKPSKPVEQGKVVTPVIEINEKVKAVAPTKKAQSKKSELPETGGEESTNKGMLFGGLFSILGLALLRRNKKNNKA.

The first 36 residues, 1-36, serve as a signal peptide directing secretion; sequence MKNNLRYGIRKHKLGAASVFLGTMIVVGMGQDKEAA. The YSIRK-G/S signaling motif signature appears at 7 to 18; sequence YGIRKHKLGAAS. The segment at 37-193 is disordered; sequence ASEQKTTTVE…VSEVKGTDVT (157 aa). Residues 37 to 507 form a ligand-binding A region region; that stretch reads ASEQKTTTVE…SNKADGNGKN (471 aa). The segment covering 39–92 has biased composition (polar residues); sequence EQKTTTVEENGNSATDNKTSETQTTATNVNHIEETQSYNATVTEQPSNATQVTT. The segment covering 112-121 has biased composition (basic and acidic residues); the sequence is TVKEEEKPQV. Residues 122–164 are compositionally biased toward polar residues; that stretch reads KETTQPQDNSGNQRQVDLTPKKVTQNQGTETQVEVAQPRTASE. Basic and acidic residues predominate over residues 174 to 189; that stretch reads DVAEAKEASDVSEVKG. A fibrinogen/elastin/tropoelastin-binding region spans residues 189 to 507; that stretch reads GTDVTSKVTV…SNKADGNGKN (319 aa). A fibronectin-binding region spans residues 508-868; the sequence is GQIIQDNDFE…EGQQTIEEDT (361 aa). Residues 541–570 form a B-1 repeat; sequence ENQDNTPLDIDYHTAIDGEGGYVDGYIETI. The 2 X approximate tandem repeats stretch occupies residues 541-600; the sequence is ENQDNTPLDIDYHTAIDGEGGYVDGYIETIEETDSSAIDIDYHTAVDSEVGHVGGYTESS. The stretch at 571-600 is one B-2 repeat; it reads EETDSSAIDIDYHTAVDSEVGHVGGYTESS. Disordered stretches follow at residues 736–804, 825–976, and 989–1015; these read LGYE…GGNI, IEED…GKVV, and VAPTKKAQSKKSELPETGGEESTNKGM. The stretch at 741–778 is one D-1 repeat; that stretch reads GQNSGNQSFEEDTEEDKPKYEQGGNIVDIDFDSVPQIH. Residues 741 to 898 are 4 X approximate tandem repeats; that stretch reads GQNSGNQSFE…TPEVPSEPET (158 aa). A D-2 repeat occupies 779-816; that stretch reads GQNKGDQSFEEDTEKDKPKYEHGGNIIDIDFDSVPQIH. The stretch at 817-855 is one D-3 repeat; that stretch reads GFNKHNEIIEEDTNKDKPNYQFGGHNSVDFEEDTLPKVS. The span at 825–834 shows a compositional bias: basic and acidic residues; sequence IEEDTNKDKP. Residues 856 to 898 form a D-4 repeat; sequence GQNEGQQTIEEDTTPPTPPTPEVPSEPETPMPPTPEVPSEPET. Over residues 870–958 the composition is skewed to pro residues; the sequence is PPTPPTPEVP…PAEPGKPVPP (89 aa). 5 WR repeats span residues 899-912, 913-926, 927-940, 941-954, and 955-968; these read PTPPTPEVPSEPET, PTPPTPEVPAEPGK, and PVPPAKEEPKKPSK. The interval 899-968 is 5 X tandem repeats, Pro-rich (WR); the sequence is PTPPTPEVPS…AKEEPKKPSK (70 aa). The LPXTG sorting signal motif lies at 1002–1006; that stretch reads LPETG. The residue at position 1005 (T1005) is a Pentaglycyl murein peptidoglycan amidated threonine. A propeptide spans 1006-1038 (removed by sortase); that stretch reads GGEESTNKGMLFGGLFSILGLALLRRNKKNNKA.

It localises to the secreted. It is found in the cell wall. Promotes bacterial attachment to multiple substrates, such as fibronectin (Fn), fibrinogen (Fg), elastin peptides and tropoelastin. This confers to S.aureus the ability to invade endothelial cells. Promotes adherence to and aggregation of activated platelets. This Staphylococcus aureus (strain Mu50 / ATCC 700699) protein is Fibronectin-binding protein A (fnbA).